The following is a 289-amino-acid chain: Acetyl-coenzyme A carboxylase carboxyl transferase subunit beta (289 aa).

One can recognise a CoA carboxyltransferase N-terminal domain in the interval Leu28–Ala289. Cys32, Cys35, Cys51, and Cys54 together coordinate Zn(2+). The C4-type zinc finger occupies Cys32–Cys54.

The protein belongs to the AccD/PCCB family. In terms of assembly, acetyl-CoA carboxylase is a heterohexamer composed of biotin carboxyl carrier protein (AccB), biotin carboxylase (AccC) and two subunits each of ACCase subunit alpha (AccA) and ACCase subunit beta (AccD). Requires Zn(2+) as cofactor.

It is found in the cytoplasm. The catalysed reaction is N(6)-carboxybiotinyl-L-lysyl-[protein] + acetyl-CoA = N(6)-biotinyl-L-lysyl-[protein] + malonyl-CoA. Its pathway is lipid metabolism; malonyl-CoA biosynthesis; malonyl-CoA from acetyl-CoA: step 1/1. Functionally, component of the acetyl coenzyme A carboxylase (ACC) complex. Biotin carboxylase (BC) catalyzes the carboxylation of biotin on its carrier protein (BCCP) and then the CO(2) group is transferred by the transcarboxylase to acetyl-CoA to form malonyl-CoA. This chain is Acetyl-coenzyme A carboxylase carboxyl transferase subunit beta, found in Dechloromonas aromatica (strain RCB).